Consider the following 292-residue polypeptide: MSRAQSSPTVIQWVIDTHPLWPSALKTKDLTSAASRALSLLTEEEQSSVLRYYHVRDAKLALASALLKRYAISRFCHVPWFQAKTTRDSRTKPVFVLPSGDEPLIFNVSHQAGLAVFLAVRDPPKGLAVGVDVVCPSERRDRDLSSLEEDGWASFVDIHADVFGAGEVSALKSMNPVPTVQGRDRALRYFYALWCLREAYVKMTGDALLASWLKDLEMHKFAPPEDMKEAQEVRLRGKKVEGVDVRLMPLLEEYMVSTAIRNGDNGERVELGEFQSLDMEEILAFGEKASKP.

It belongs to the P-Pant transferase superfamily.

The enzyme catalyses apo-[ACP] + CoA = holo-[ACP] + adenosine 3',5'-bisphosphate + H(+). Its function is as follows. Transfers the 4'-phosphopantetheine moiety from coenzyme A to a Ser of an acyl-carrier-protein. The enzyme is able to transfer the cofactor to a broad range of enzymes with acyl- or peptidyl-carrier protein domains. Required for primary biological processes such as growth and asexual/sexual development, and activates target enzymes involved in the synthesis of metabolites such as fatty acids, nonribosomal peptides and polyketides such as the gamma-pyrones fusapyrone (FPY) and deoxyfusapyrone (dFPY). In Fusarium mangiferae (Mango malformation disease fungus), this protein is 4'-phosphopantetheinyl transferase 1.